The sequence spans 324 residues: MTVRTAAEPPNRIEVDMDAPSLDTDSSCTSLSSSVQRYEYKHGRRYHGYHAGSYPFPNDKREQDRLDMIHHLYTRILNDRLFLAPLDPRGKAILDIGTGTGIWALHMGDAHPAARLIVGNDLSPIQPSWAPANVRFVVDDVEKDWVDRHPYDFIHCRYMAGSIKDWPRLIRQCYAHLRPGGWLELQESVNVMYSEDGTLPPDSFMARMMHGLIVACEKIGRTMDPAPSMEKWVQEAGFDPITKHRFKIPVGSWPKDPRLKECGSLMRVNFVEGVEAFTASLFTEVLGWTPEEVAVLNTGVREEAMRNDIHAIFDFVVIVAQKPY.

Residues 1-28 (MTVRTAAEPPNRIEVDMDAPSLDTDSSC) are disordered.

Belongs to the methyltransferase superfamily. LaeA methyltransferase family.

Its pathway is secondary metabolite biosynthesis. Its function is as follows. Methyltransferase; part of the gene cluster that mediates the biosynthesis of pyranterreones, a family of antioxidative compounds. The first step of pyranonigrins biosynthesis is performed by the hybrid PKS-NRPS synthetase pytA that condenses 4 malonyl-CoA units ato the acetyl starter unit by the modular PKS of pytA. The acyl chain is then connected to an L-serine through the amide bond by the modular NRPS of pytA. A tetramic acid is formed and released from the PKS-NRPS pytA to give pyranterreone 5 with the help of the thioesterase pytI. Pyranterreone 5 could be methylated by pytC to afford pyranterreone 6. Both pyranterreones 5 and 6 are subsequently oxidized by the FAD-linked oxidoreductase pytB and the cytochrome P450 monooxygenase pytD to form the fused gamma-pyrone core, resulting in pyranterreones 7 and 11, respectively. The hydroxy group at C-8 of pyranterreones 7 and 11 are dehydrated by the aspartyl protease pytH to form a delta-7 double bond to give pyranterreones 3 and 1, 2 accordingly. The exo-methylene of pyranterreone 3 could be reduced into a pendant methyl by reductase pytE to provide pyranterreone 4, also known as cordylactam. Pyranterreone 4 can be reconverted to pyranterreone 3 through pytB-catalyzed dehydrogenation or further oxidized to pyranterreones 9 and 10. The polypeptide is Methyltransferase pytC (Aspergillus terreus).